Reading from the N-terminus, the 858-residue chain is Putative glutamate--cysteine ligase 2-3 (858 aa).

Residues 1 to 372 (MSDARNVAVG…RDVPPAGASL (372 aa)) form a carboxylate-amine ligase region. The segment at 373 to 858 (GVAPAVSAPD…GSKDTWIPRR (486 aa)) is unknown.

In the N-terminal section; belongs to the glutamate--cysteine ligase type 2 family. YbdK subfamily.

It carries out the reaction L-cysteine + L-glutamate + ATP = gamma-L-glutamyl-L-cysteine + ADP + phosphate + H(+). Its function is as follows. ATP-dependent carboxylate-amine ligase which exhibits weak glutamate--cysteine ligase activity. The polypeptide is Putative glutamate--cysteine ligase 2-3 (Frankia alni (strain DSM 45986 / CECT 9034 / ACN14a)).